Consider the following 175-residue polypeptide: Vitamin K epoxide reductase complex subunit 1-like protein 1 (175 aa).

At M1–R12 the chain is on the cytoplasmic side. Residues W13 to V35 form a helical membrane-spanning segment. The Lumenal portion of the chain corresponds to E36–N86. C49 and C57 are disulfide-bonded. N86 is a binding site for (S)-warfarin. A helical transmembrane segment spans residues S87–G101. Topologically, residues M102–A106 are cytoplasmic. A helical membrane pass occupies residues M107 to L134. Topologically, residues K135–L137 are lumenal. A disulfide bridge links C138 with C141. Residues C138–L159 form a helical membrane-spanning segment. Residues C141 and Y145 each contribute to the phylloquinone site. Position 145 (Y145) interacts with (S)-warfarin. At V160–D175 the chain is on the cytoplasmic side.

The protein belongs to the VKOR family.

It is found in the endoplasmic reticulum membrane. The catalysed reaction is phylloquinone + [protein]-disulfide + H2O = 2,3-epoxyphylloquinone + [protein]-dithiol. It carries out the reaction phylloquinol + [protein]-disulfide = phylloquinone + [protein]-dithiol. Its activity is regulated as follows. Inhibited by warfarin (coumadin). Warfarin locks VKORC1 in both redox states into the closed conformation. Its function is as follows. Involved in vitamin K metabolism. Can reduce inactive vitamin K 2,3-epoxide to active vitamin K, and may contribute to vitamin K-mediated protection against oxidative stress. Plays a role in vitamin K-dependent gamma-carboxylation of Glu residues in target proteins. This Takifugu rubripes (Japanese pufferfish) protein is Vitamin K epoxide reductase complex subunit 1-like protein 1 (vkorc1l1).